A 135-amino-acid polypeptide reads, in one-letter code: Hemoglobin subunit beta-2 (135 aa).

Positions 2-135 (HWTAEEKALV…VVDALSKGYH (134 aa)) constitute a Globin domain. Heme b contacts are provided by H57 and H81.

The protein belongs to the globin family. Hb 2 is a heterotetramer of two alpha and two beta-2 chains. As to expression, red blood cells (at protein level).

Involved in oxygen transport from gills to the various peripheral tissues. The polypeptide is Hemoglobin subunit beta-2 (Somniosus microcephalus (Greenland sleeper shark)).